The chain runs to 396 residues: NADH-quinone oxidoreductase subunit D (396 aa).

Belongs to the complex I 49 kDa subunit family. NDH-1 is composed of 14 different subunits. Subunits NuoB, C, D, E, F, and G constitute the peripheral sector of the complex.

The protein resides in the cell inner membrane. The catalysed reaction is a quinone + NADH + 5 H(+)(in) = a quinol + NAD(+) + 4 H(+)(out). NDH-1 shuttles electrons from NADH, via FMN and iron-sulfur (Fe-S) centers, to quinones in the respiratory chain. The immediate electron acceptor for the enzyme in this species is believed to be ubiquinone. Couples the redox reaction to proton translocation (for every two electrons transferred, four hydrogen ions are translocated across the cytoplasmic membrane), and thus conserves the redox energy in a proton gradient. In Brucella canis (strain ATCC 23365 / NCTC 10854 / RM-666), this protein is NADH-quinone oxidoreductase subunit D.